The primary structure comprises 988 residues: Protein SEMI-ROLLED LEAF 2 (988 aa).

Residues 844 to 865 (SVDGGLHESPITNTGSSISKTT) are disordered. Over residues 853 to 865 (PITNTGSSISKTT) the composition is skewed to polar residues.

Expressed in root tips, and in the vascular bundles of leaf blades, leaf sheaths, and roots, especially in their sclerenchymatous cells.

It localises to the nucleus. The protein localises to the cytoplasm. In terms of biological role, functions in regulating leaf rolling through abaxial side leaf cell differentiation. May be involved in the transdifferentiation process from mesophyll cells to sclerenchymatous cells. This Oryza sativa subsp. japonica (Rice) protein is Protein SEMI-ROLLED LEAF 2.